Reading from the N-terminus, the 1446-residue chain is ABC-type transporter oblD (1446 aa).

Asparagine 9, asparagine 28, asparagine 222, asparagine 281, and asparagine 305 each carry an N-linked (GlcNAc...) asparagine glycan. Residues 104–357 (LEVLSLVSKA…FLDMGFVCPD (254 aa)) form the ABC transporter 1 domain. Transmembrane regions (helical) follow at residues 468 to 488 (VTIS…SIFY), 502 to 522 (ALLF…MLTL), 548 to 568 (MIMD…VLYF), 577 to 597 (GAFF…SMFF), 610 to 630 (ALPF…FTIP), and 719 to 739 (IGVI…ATDF). Positions 796–1038 (FQWKDVCFDI…ILIDYFVRNG (243 aa)) constitute an ABC transporter 2 domain. 832-839 (GVSGAGKT) is a binding site for ATP. A run of 5 helical transmembrane segments spans residues 1147-1167 (ALCV…PNTI), 1177-1197 (IFML…HFVA), 1217-1237 (FIIS…VLMF), 1265-1285 (LMVW…IAAF), and 1301-1321 (LCLI…FWIF). N-linked (GlcNAc...) asparagine glycans are attached at residues asparagine 1344 and asparagine 1359. A helical membrane pass occupies residues 1412–1432 (FGLMWVFIVFNIFAACLLYWW).

This sequence belongs to the ABC transporter superfamily. ABCG family. PDR (TC 3.A.1.205) subfamily.

The protein resides in the cell membrane. In terms of biological role, ABC-type transporter; part of the gene cluster that mediates the biosynthesis of the sesterterpenes ophiobolins, fungal phytotoxins with potential anti-cancer activities. Acts as a specific transporter involved in ophiobolins secretion. The polypeptide is ABC-type transporter oblD (Aspergillus clavatus (strain ATCC 1007 / CBS 513.65 / DSM 816 / NCTC 3887 / NRRL 1 / QM 1276 / 107)).